Here is a 241-residue protein sequence, read N- to C-terminus: Probable transcriptional regulatory protein Daro_4067 (241 aa).

The interval 1–22 is disordered; the sequence is MAGHSKWANIQHRKGRQDEKRG.

The protein belongs to the TACO1 family.

The protein resides in the cytoplasm. The protein is Probable transcriptional regulatory protein Daro_4067 of Dechloromonas aromatica (strain RCB).